Here is a 272-residue protein sequence, read N- to C-terminus: D-aminoacyl-tRNA deacylase (272 aa).

It belongs to the DtdA deacylase family. Monomer. Requires Zn(2+) as cofactor.

It catalyses the reaction a D-aminoacyl-tRNA + H2O = a tRNA + a D-alpha-amino acid + H(+). It carries out the reaction glycyl-tRNA(Ala) + H2O = tRNA(Ala) + glycine + H(+). Functionally, D-aminoacyl-tRNA deacylase with broad substrate specificity. By recycling D-aminoacyl-tRNA to D-amino acids and free tRNA molecules, this enzyme counteracts the toxicity associated with the formation of D-aminoacyl-tRNA entities in vivo. In Thermococcus onnurineus (strain NA1), this protein is D-aminoacyl-tRNA deacylase.